The sequence spans 348 residues: NADH-quinone oxidoreductase subunit H (348 aa).

8 helical membrane passes run 10-30, 82-102, 115-135, 161-181, 199-219, 251-271, 287-307, and 322-342; these read LPLFIVVGKTLLLLTVLLVLI, GVFLLAPFVSATLALSAWAVV, VGLLYILAISSLEVYGVIMGG, IGFVLVTVILVSGSLDLTTIV, LLDWNWLILFPMFIIFFISAL, LFFLGEYVAIVLMCALTTILF, VPGVIWFVLKVCFVFFWFAMV, and LGWKVFLPISLAMVVITAAIL.

The protein belongs to the complex I subunit 1 family. As to quaternary structure, NDH-1 is composed of 14 different subunits. Subunits NuoA, H, J, K, L, M, N constitute the membrane sector of the complex.

It localises to the cell inner membrane. It catalyses the reaction a quinone + NADH + 5 H(+)(in) = a quinol + NAD(+) + 4 H(+)(out). NDH-1 shuttles electrons from NADH, via FMN and iron-sulfur (Fe-S) centers, to quinones in the respiratory chain. The immediate electron acceptor for the enzyme in this species is believed to be ubiquinone. Couples the redox reaction to proton translocation (for every two electrons transferred, four hydrogen ions are translocated across the cytoplasmic membrane), and thus conserves the redox energy in a proton gradient. This subunit may bind ubiquinone. This is NADH-quinone oxidoreductase subunit H from Bartonella bacilliformis (strain ATCC 35685 / KC583 / Herrer 020/F12,63).